The sequence spans 336 residues: NADH-quinone oxidoreductase subunit H (336 aa).

The next 8 membrane-spanning stretches (helical) occupy residues 4–24 (YILW…LVVA), 75–95 (YLFF…WAVI), 108–128 (LGLL…VIAG), 154–174 (MGFA…TGII), 181–201 (IWHW…IAGI), 233–253 (LFFL…SIMF), 272–292 (FVPG…MFLW), and 308–328 (LGWK…ACMV).

This sequence belongs to the complex I subunit 1 family. In terms of assembly, NDH-1 is composed of 14 different subunits. Subunits NuoA, H, J, K, L, M, N constitute the membrane sector of the complex.

It localises to the cell inner membrane. It catalyses the reaction a quinone + NADH + 5 H(+)(in) = a quinol + NAD(+) + 4 H(+)(out). Its function is as follows. NDH-1 shuttles electrons from NADH, via FMN and iron-sulfur (Fe-S) centers, to quinones in the respiratory chain. The immediate electron acceptor for the enzyme in this species is believed to be ubiquinone. Couples the redox reaction to proton translocation (for every two electrons transferred, four hydrogen ions are translocated across the cytoplasmic membrane), and thus conserves the redox energy in a proton gradient. This subunit may bind ubiquinone. The protein is NADH-quinone oxidoreductase subunit H of Francisella tularensis subsp. tularensis (strain FSC 198).